A 390-amino-acid polypeptide reads, in one-letter code: Na(+)/H(+) antiporter NhaA 1 (390 aa).

Helical transmembrane passes span 14–34, 59–79, 94–114, 125–145, 154–174, 179–199, 205–225, 260–280, 295–315, 328–348, and 362–382; these read SGILIILAMILALILANNGVL, TILWVNDGLMAIFFFFIGLEL, VALPSIAGIGGVIVPAVIFYV, GWAIPTVSDTAFALAVLFLLG, LFLLSLAIIDDVAAIIIIAIF, LSIISLFISFCAIVILTILNY, IYIYLLCGIVLWVSVLMSGIH, PIVAFLILPIFAFSNAGVVFS, IIFGLFIGKQIGVFSFAFLAI, WLHLYGLSILTGVGMSMSLFI, and ANKIAILLASTMCAVTGYFVL.

It belongs to the NhaA Na(+)/H(+) (TC 2.A.33) antiporter family.

The protein localises to the cell inner membrane. The catalysed reaction is Na(+)(in) + 2 H(+)(out) = Na(+)(out) + 2 H(+)(in). Functionally, na(+)/H(+) antiporter that extrudes sodium in exchange for external protons. The chain is Na(+)/H(+) antiporter NhaA 1 from Campylobacter fetus subsp. fetus (strain 82-40).